Consider the following 111-residue polypeptide: Rubredoxin (111 aa).

The Rubredoxin-like domain maps to 11-62; the sequence is LDRFECRSCGYVYEPEKGDSKHDIAPETPFAELPINWRCPVCTAKKAAFSNI. The Fe cation site is built by Cys16, Cys19, Cys49, and Cys52.

Belongs to the rubredoxin family. It depends on Fe(3+) as a cofactor.

Its function is as follows. Rubredoxin is a small nonheme, iron protein lacking acid-labile sulfide. Its single Fe, chelated to 4 Cys, functions as an electron acceptor and may also stabilize the conformation of the molecule. Could be involved in hydrogenase-linked redox processes. The sequence is that of Rubredoxin (rub) from Trichormus variabilis (strain ATCC 29413 / PCC 7937) (Anabaena variabilis).